The primary structure comprises 391 residues: Terminal nucleotidyltransferase 5C (391 aa).

Belongs to the TENT family. As to quaternary structure, interacts with BCCIP and PABPC1; the interaction has no effect on TENT5C poly(A) polymerase function. Interacts with PLK4; this interaction leads to the TENT5C recruitment into the centrosome.

It is found in the nucleus. The protein localises to the cytoplasm. It localises to the cytoskeleton. Its subcellular location is the microtubule organizing center. The protein resides in the centrosome. It catalyses the reaction RNA(n) + ATP = RNA(n)-3'-adenine ribonucleotide + diphosphate. Its function is as follows. Catalyzes the transfer of one adenosine molecule from an ATP to an mRNA poly(A) tail bearing a 3'-OH terminal group and enhances mRNA stability and gene expression. Can also elongate RNA oligos ending with uridine molecule, provided that the sequence is adenosine-rich. Mainly targets mRNAs encoding endoplasmic reticulum-targeted protein. The polypeptide is Terminal nucleotidyltransferase 5C (Rattus norvegicus (Rat)).